A 217-amino-acid polypeptide reads, in one-letter code: Pyrophosphatase PpaX (217 aa).

Catalysis depends on aspartate 11, which acts as the Nucleophile.

Belongs to the HAD-like hydrolase superfamily. PpaX family. The cofactor is Mg(2+).

It catalyses the reaction diphosphate + H2O = 2 phosphate + H(+). Its function is as follows. Hydrolyzes pyrophosphate formed during P-Ser-HPr dephosphorylation by HPrK/P. Might play a role in controlling the intracellular pyrophosphate pool. The polypeptide is Pyrophosphatase PpaX (Listeria welshimeri serovar 6b (strain ATCC 35897 / DSM 20650 / CCUG 15529 / CIP 8149 / NCTC 11857 / SLCC 5334 / V8)).